A 478-amino-acid chain; its full sequence is Sulfate adenylyltransferase subunit 1 (478 aa).

In terms of domain architecture, tr-type G spans 24–240 (KSMLRFLTCG…VLEDIDIDAD (217 aa)). The G1 stretch occupies residues 33 to 40 (GSVDDGKS). 33-40 (GSVDDGKS) contacts GTP. Positions 91 to 95 (GITID) are G2. The interval 112–115 (DTPG) is G3. GTP contacts are provided by residues 112–116 (DTPGH) and 167–170 (NKMD). The tract at residues 167-170 (NKMD) is G4. The segment at 206-208 (SAL) is G5.

This sequence belongs to the TRAFAC class translation factor GTPase superfamily. Classic translation factor GTPase family. CysN/NodQ subfamily. As to quaternary structure, heterodimer composed of CysD, the smaller subunit, and CysN.

The catalysed reaction is sulfate + ATP + H(+) = adenosine 5'-phosphosulfate + diphosphate. Its pathway is sulfur metabolism; hydrogen sulfide biosynthesis; sulfite from sulfate: step 1/3. With CysD forms the ATP sulfurylase (ATPS) that catalyzes the adenylation of sulfate producing adenosine 5'-phosphosulfate (APS) and diphosphate, the first enzymatic step in sulfur assimilation pathway. APS synthesis involves the formation of a high-energy phosphoric-sulfuric acid anhydride bond driven by GTP hydrolysis by CysN coupled to ATP hydrolysis by CysD. This chain is Sulfate adenylyltransferase subunit 1, found in Aliivibrio salmonicida (strain LFI1238) (Vibrio salmonicida (strain LFI1238)).